The primary structure comprises 198 residues: Na(+)-translocating NADH-quinone reductase subunit E (198 aa).

A run of 6 helical transmembrane segments spans residues 11–31 (SIFI…FLAV), 39–59 (FGLG…NNLV), 77–97 (FLNF…LEMI), 110–130 (GIFL…SFMV), 140–160 (VVYG…LAGI), and 176–196 (LGIT…FSGV).

The protein belongs to the NqrDE/RnfAE family. As to quaternary structure, composed of six subunits; NqrA, NqrB, NqrC, NqrD, NqrE and NqrF.

It is found in the cell inner membrane. It carries out the reaction a ubiquinone + n Na(+)(in) + NADH + H(+) = a ubiquinol + n Na(+)(out) + NAD(+). Functionally, NQR complex catalyzes the reduction of ubiquinone-1 to ubiquinol by two successive reactions, coupled with the transport of Na(+) ions from the cytoplasm to the periplasm. NqrA to NqrE are probably involved in the second step, the conversion of ubisemiquinone to ubiquinol. The polypeptide is Na(+)-translocating NADH-quinone reductase subunit E (Vibrio anguillarum (Listonella anguillarum)).